The primary structure comprises 79 residues: NADH-ubiquinone oxidoreductase chain 5 (79 aa).

2 helical membrane-spanning segments follow: residues 5–27 (TPIM…TNPY) and 40–57 (VMYA…FILS).

It belongs to the complex I subunit 5 family. As to quaternary structure, core subunit of respiratory chain NADH dehydrogenase (Complex I) which is composed of 45 different subunits.

Its subcellular location is the mitochondrion inner membrane. The catalysed reaction is a ubiquinone + NADH + 5 H(+)(in) = a ubiquinol + NAD(+) + 4 H(+)(out). Core subunit of the mitochondrial membrane respiratory chain NADH dehydrogenase (Complex I) which catalyzes electron transfer from NADH through the respiratory chain, using ubiquinone as an electron acceptor. Essential for the catalytic activity and assembly of complex I. The polypeptide is NADH-ubiquinone oxidoreductase chain 5 (MT-ND5) (Macaca fascicularis (Crab-eating macaque)).